The primary structure comprises 227 residues: Ribonuclease HII (227 aa).

Residues 1–210 (MKLAGIDEAG…LKKIEEKLAK (210 aa)) form the RNase H type-2 domain. The a divalent metal cation site is built by Asp7, Glu8, and Asp105.

The protein belongs to the RNase HII family. It depends on Mn(2+) as a cofactor. Requires Mg(2+) as cofactor.

The protein resides in the cytoplasm. The catalysed reaction is Endonucleolytic cleavage to 5'-phosphomonoester.. Functionally, endonuclease that specifically degrades the RNA of RNA-DNA hybrids. The polypeptide is Ribonuclease HII (Thermococcus onnurineus (strain NA1)).